Here is a 478-residue protein sequence, read N- to C-terminus: Patatin-like phospholipase domain-containing protein 2 (478 aa).

The Cytoplasmic portion of the chain corresponds to 1–8; that stretch reads MFPRETKW. A helical membrane pass occupies residues 9 to 29; the sequence is NISFAGCGFLGVYHIGVASCL. The 170-residue stretch at 10 to 179 folds into the PNPLA domain; that stretch reads ISFAGCGFLG…SDNLPLYELK (170 aa). Positions 14–19 match the GXGXXG motif; sequence GCGFLG. The Extracellular segment spans residues 30-42; it reads REHAPFLVANATH. The N-linked (GlcNAc...) asparagine glycan is linked to Asn39. Residues 43 to 63 traverse the membrane as a helical segment; that stretch reads IYGASAGALTATALVTGACLG. The short motif at 45–49 is the GXSXG element; it reads GASAG. Ser47 serves as the catalytic Nucleophile. At 64-137 the chain is on the cytoplasmic side; that stretch reads EAGANIIEVS…IISHFSSKDE (74 aa). A Glycyl lysine isopeptide (Lys-Gly) (interchain with G-Cter in ubiquitin) cross-link involves residue Lys92. A helical membrane pass occupies residues 138 to 158; that stretch reads LIQANVCSTFIPVYCGLIPPT. The Extracellular segment spans residues 159 to 323; that stretch reads LQGVRYVDGG…TTLSNMLPVR (165 aa). Asp166 acts as the Proton acceptor in catalysis. Residues 166-168 carry the DGA/G motif; sequence DGG. The chain crosses the membrane as a helical span at residues 324–344; that stretch reads LATAMMVPYTLPLESAVSFTI. Topologically, residues 345-478 are cytoplasmic; that stretch reads RLLEWLPDVP…PQDPSGLPPC (134 aa). Ser366 is subject to Phosphoserine; in vitro. Ser388 is subject to Phosphoserine; by PKA. Phosphoserine occurs at positions 398 and 422. Residues 456–478 form a disordered region; sequence RAPASPTATDPATPQDPSGLPPC. Over residues 457–478 the composition is skewed to low complexity; it reads APASPTATDPATPQDPSGLPPC. The residue at position 460 (Ser460) is a Phosphoserine; in vitro.

Interacts with ABHD5; this association stimulates PNPLA2 triglyceride hydrolase activity. Interacts with SERPINF1; this interaction stimulates the phospholipase A2 activity of PNPLA2. Despite a colocalization in lipid droplets, it probably does not interact with PLIN. Interacts with PLIN5; prevents interaction with ABHD5. Interacts with FAF2. In terms of processing, phosphorylation at Ser-398 by PKA is increased during fasting and moderate intensity exercise, and moderately increases lipolytic activity. Post-translationally, ubiquitinated by PEX2 in response to reactive oxygen species (ROS), leading to its degradation. Ubiquitination is stimulated by LDAH.

The protein localises to the lipid droplet. Its subcellular location is the cell membrane. It localises to the cytoplasm. The catalysed reaction is a triacylglycerol + H2O = a diacylglycerol + a fatty acid + H(+). It catalyses the reaction a triacylglycerol + H2O = a 1,2-diacylglycerol + a fatty acid + H(+). It carries out the reaction a triacylglycerol + H2O = a 1,3-diacylglycerol + a fatty acid + H(+). The enzyme catalyses a triacyl-sn-glycerol + H2O = a 1,3-diacyl-sn-glycerol + a fatty acid + H(+). The catalysed reaction is a triacyl-sn-glycerol + H2O = a 2,3-diacyl-sn-glycerol + a fatty acid + H(+). It catalyses the reaction a 1-acylglycerol + a 1,3-diacylglycerol = a triacylglycerol + glycerol. It carries out the reaction a 1-acylglycerol + a 1,2-diacylglycerol = a triacylglycerol + glycerol. The enzyme catalyses 2 a 1-acylglycerol = a 1,2-diacylglycerol + glycerol. The catalysed reaction is a triacylglycerol + all-trans-retinol = an all-trans-retinyl ester + a diacylglycerol. It catalyses the reaction 1,2-di-(9Z-octadecenoyl)-glycerol + (9Z)-octadecenoate + H(+) = 1,2,3-tri-(9Z-octadecenoyl)-glycerol + H2O. It carries out the reaction 1,2,3-tri-(9Z-octadecenoyl)-glycerol + H2O = 1,3-di-(9Z-octadecenoyl)-glycerol + (9Z)-octadecenoate + H(+). The enzyme catalyses 1-(9Z-octadecenoyl)-glycerol + 1,3-di-(9Z-octadecenoyl)-glycerol = 1,2,3-tri-(9Z-octadecenoyl)-glycerol + glycerol. The catalysed reaction is 1-(9Z-octadecenoyl)-glycerol + 1,2-di-(9Z-octadecenoyl)-glycerol = 1,2,3-tri-(9Z-octadecenoyl)-glycerol + glycerol. It catalyses the reaction 2 1-(9Z-octadecenoyl)-glycerol = 1,2-di-(9Z-octadecenoyl)-glycerol + glycerol. It carries out the reaction 1,2,3-tri-(9Z-octadecenoyl)-glycerol + all-trans-retinol = all-trans-retinyl 9Z-octadecenoate + di-(9Z)-octadecenoylglycerol. The enzyme catalyses 1,2,3-tri-(9Z)-hexadecenoylglycerol + H2O = 1,3-di-(9Z)-hexadecenoylglycerol + (9Z)-hexadecenoate + H(+). The catalysed reaction is 1,2,3-tri-(9Z,12Z)-octadecadienoylglycerol + H2O = 1,3-di-(9Z,12Z)-octadecadienoylglycerol + (9Z,12Z)-octadecadienoate + H(+). It catalyses the reaction 1,2,3-tri-(9Z,12Z,15Z)-octadecatrienoylglycerol + H2O = 1,3-di-(9Z,12Z,15Z)-octadecatrienoylglycerol + (9Z,12Z,15Z)-octadecatrienoate + H(+). It carries out the reaction 1,3-di-(9Z)-octadecenoyl-2-hexadecanoylglycerol + H2O = 1,3-di-(9Z-octadecenoyl)-glycerol + hexadecanoate + H(+). The enzyme catalyses 1,2-di-(9Z)-octadecenoyl-3-hexadecanoyl-sn-glycerol + H2O = 1-(9Z)-octadecenoyl-3-hexadecanoyl-sn-glycerol + (9Z)-octadecenoate + H(+). The catalysed reaction is 1-hexadecanoyl-2,3-di-(9Z)-octadecenoyl-sn-glycerol + H2O = 1-hexadecanoyl-3-(9Z)-octadecenoyl-sn-glycerol + (9Z)-octadecenoate + H(+). It catalyses the reaction 1,2,3-tri-(9Z-octadecenoyl)-glycerol + H2O = 2,3-di-(9Z)-octadecenoyl-sn-glycerol + (9Z)-octadecenoate + H(+). It carries out the reaction 1,2,3-tri-(9Z)-hexadecenoylglycerol + H2O = 2,3-di-(9Z)-hexadecenoyl-sn-glycerol + (9Z)-hexadecenoate + H(+). The enzyme catalyses 1,2,3-tri-(9Z,12Z)-octadecadienoylglycerol + H2O = 2,3-di-(9Z,12Z)-octadecadienoyl-sn-glycerol + (9Z,12Z)-octadecadienoate + H(+). The catalysed reaction is 1,2,3-tri-(9Z,12Z,15Z)-octadecatrienoylglycerol + H2O = 2,3-di-(9Z,12Z,15Z)-octadecatrienoyl-sn-glycerol + (9Z,12Z,15Z)-octadecatrienoate + H(+). It catalyses the reaction 1,3-di-(9Z)-octadecenoyl-2-hexadecanoylglycerol + H2O = 2-hexadecanoyl-3-(9Z)-octadecenoyl-sn-glycerol + (9Z)-octadecenoate + H(+). It carries out the reaction 1-hexadecanoyl-2,3-di-(9Z)-octadecenoyl-sn-glycerol + H2O = 2,3-di-(9Z)-octadecenoyl-sn-glycerol + hexadecanoate + H(+). The enzyme catalyses 1,2-di-(9Z)-octadecenoyl-3-hexadecanoyl-sn-glycerol + H2O = 2-(9Z-octadecenoyl)-3-hexadecanoyl-sn-glycerol + (9Z)-octadecenoate + H(+). The catalysed reaction is a 1,2-diacyl-sn-glycero-3-phosphocholine + H2O = a 1-acyl-sn-glycero-3-phosphocholine + a fatty acid + H(+). It catalyses the reaction 1,2,3-tri-(9Z-octadecenoyl)-glycerol + 9-hydroxy-octadecanoate = 9-(9Z-octadecenoyloxy)-octadecanoate + 2,3-di-(9Z)-octadecenoyl-sn-glycerol. It carries out the reaction 1-hexadecanoyl-2,3-di-(9Z)-octadecenoyl-sn-glycerol + 9-hydroxy-octadecanoate = 9-hexadecanoyloxy-octadecanoate + 2,3-di-(9Z)-octadecenoyl-sn-glycerol. The enzyme catalyses 1,2,3-tri-(10Z)-heptadecenoylglycerol + 9-hydroxy-octadecanoate = 2,3-di-(10Z-heptadecenoyl)-sn-glycerol + 9-(10Z-heptadecenoyloxy)-octadecanoate. The catalysed reaction is 1,2,3-tri-(9Z,12Z)-octadecadienoylglycerol + 9-hydroxy-octadecanoate = 2,3-di-(9Z,12Z)-octadecadienoyl-sn-glycerol + 9-(9Z,12Z-octadecadienoyloxy)-octadecanoate. It catalyses the reaction 1,2,3-tri-(9Z)-hexadecenoylglycerol + 9-hydroxy-octadecanoate = 2,3-di-(9Z)-hexadecenoyl-sn-glycerol + 9-(9Z-hexadecenoyloxy)-octadecanoate. It carries out the reaction 9-hydroxy-octadecanoate + 1,2-di-(9Z-octadecenoyl)-sn-glycerol = 9-(9Z-octadecenoyloxy)-octadecanoate + 2-(9Z-octadecenoyl)-glycerol. The enzyme catalyses 1-hexadecanoyl-2,3-di-(9Z)-octadecenoyl-sn-glycerol + 9-hydroxy-octadecanoate = 1-hexadecanoyl-3-(9Z)-octadecenoyl-sn-glycerol + 9-(9Z-octadecenoyloxy)-octadecanoate. Its pathway is glycerolipid metabolism; triacylglycerol degradation. Its function is as follows. Catalyzes the initial step in triglyceride hydrolysis in adipocyte and non-adipocyte lipid droplets. Exhibits a strong preference for the hydrolysis of long-chain fatty acid esters at the sn-2 position of the glycerol backbone and acts coordinately with LIPE/HLS and DGAT2 within the lipolytic cascade. Also possesses acylglycerol transacylase and phospholipase A2 activities. Transfers fatty acid from triglyceride to retinol, hydrolyzes retinylesters, and generates 1,3-diacylglycerol from triglycerides. Regulates adiposome size and may be involved in the degradation of adiposomes. Catalyzes the formation of an ester bond between hydroxy fatty acids and fatty acids derived from triglycerides or diglycerides to generate fatty acid esters of hydroxy fatty acids (FAHFAs) in adipocytes. Acts antagonistically with LDAH in regulation of cellular lipid stores. Inhibits LDAH-stimulated lipid droplet fusion. May play an important role in energy homeostasis. May play a role in the response of the organism to starvation, enhancing hydrolysis of triglycerides and providing free fatty acids to other tissues to be oxidized in situations of energy depletion. In Rattus norvegicus (Rat), this protein is Patatin-like phospholipase domain-containing protein 2.